The chain runs to 223 residues: Small ribosomal subunit protein uS11m (223 aa).

A mitochondrion-targeting transit peptide spans 1–38; that stretch reads MVLKHSVTYNLSFFISFTFSSIFFSSLILFLVYKSVLS.

This sequence belongs to the universal ribosomal protein uS11 family. In terms of assembly, component of the mitochondrial small ribosomal subunit (mt-SSU). Mature yeast 74S mitochondrial ribosomes consist of a small (37S) and a large (54S) subunit. The 37S small subunit contains a 15S ribosomal RNA (15S mt-rRNA) and at least 32 different proteins. The 54S large subunit contains a 21S rRNA (21S mt-rRNA) and at least 45 different proteins.

The protein resides in the mitochondrion. In terms of biological role, component of the mitochondrial ribosome (mitoribosome), a dedicated translation machinery responsible for the synthesis of mitochondrial genome-encoded proteins, including at least some of the essential transmembrane subunits of the mitochondrial respiratory chain. The mitoribosomes are attached to the mitochondrial inner membrane and translation products are cotranslationally integrated into the membrane. The chain is Small ribosomal subunit protein uS11m (mrps18) from Schizosaccharomyces pombe (strain 972 / ATCC 24843) (Fission yeast).